The following is a 52-amino-acid chain: Insulin (52 aa).

Cystine bridges form between C7–C38, C19–C51, and C37–C42.

The protein belongs to the insulin family. As to quaternary structure, heterodimer of a B chain and an A chain linked by two disulfide bonds.

Its subcellular location is the secreted. Insulin decreases blood glucose concentration. It increases cell permeability to monosaccharides, amino acids and fatty acids. It accelerates glycolysis, the pentose phosphate cycle, and glycogen synthesis in liver. This Amia calva (Bowfin) protein is Insulin (ins).